A 530-amino-acid polypeptide reads, in one-letter code: Phosphoenolpyruvate carboxykinase (ATP) (530 aa).

Positions 58, 195, and 201 each coordinate substrate. ATP-binding positions include Lys-201, His-220, and Gly-236–Thr-244. Positions 201 and 220 each coordinate Mn(2+). Residue Asp-257 participates in Mn(2+) binding. ATP contacts are provided by residues Glu-285, Arg-321, Arg-440–Ile-441, and Thr-446. Arg-321 provides a ligand contact to substrate.

This sequence belongs to the phosphoenolpyruvate carboxykinase (ATP) family. Mn(2+) is required as a cofactor.

The protein resides in the cytoplasm. The catalysed reaction is oxaloacetate + ATP = phosphoenolpyruvate + ADP + CO2. It participates in carbohydrate biosynthesis; gluconeogenesis. In terms of biological role, involved in the gluconeogenesis. Catalyzes the conversion of oxaloacetate (OAA) to phosphoenolpyruvate (PEP) through direct phosphoryl transfer between the nucleoside triphosphate and OAA. The chain is Phosphoenolpyruvate carboxykinase (ATP) from Staphylococcus haemolyticus (strain JCSC1435).